The sequence spans 362 residues: Probable S-adenosylmethionine-dependent methyltransferase At5g37970 (362 aa).

Residues Y19, C66, N71, D107, S136, and F137 each contribute to the S-adenosyl-L-homocysteine site. Mg(2+)-binding residues include N175, E261, and F263.

The protein belongs to the methyltransferase superfamily. Type-7 methyltransferase family. In terms of assembly, homodimer. The cofactor is Mg(2+).

This chain is Probable S-adenosylmethionine-dependent methyltransferase At5g37970, found in Arabidopsis thaliana (Mouse-ear cress).